Consider the following 145-residue polypeptide: Large ribosomal subunit protein cL37 (145 aa).

A chloroplast-targeting transit peptide spans 1-63 (MALLCFNSFT…PRKNSIFIAS (63 aa)). A disordered region spans residues 125–145 (KRRLRKKGNWPPSKMKKLEGV).

It belongs to the chloroplast-specific ribosomal protein cL37 family. In terms of assembly, part of the 50S ribosomal subunit.

Its subcellular location is the plastid. The protein localises to the chloroplast. The polypeptide is Large ribosomal subunit protein cL37 (PSRP5) (Pisum sativum (Garden pea)).